The following is a 95-amino-acid chain: Scorpine-like peptide Smp76 (95 aa).

The first 19 residues, 1-19 (MNCKLTALLFLGLIVIASC), serve as a signal peptide directing secretion. The 41-residue stretch at 55–95 (EFQCVANVDTLGNCKKHCAKTTGEKGYCHGTKCKCGIELSY) folds into the BetaSPN-type CS-alpha/beta domain. 3 disulfides stabilise this stretch: cysteine 58–cysteine 82, cysteine 68–cysteine 87, and cysteine 72–cysteine 89.

Post-translationally, disulfide bonds are critical for antiviral function, and their disruption inhibit viral activity. Expressed by the venom gland.

Its subcellular location is the secreted. Antibacterial peptide. Dose-dependently inhibits Dengue virus (DENV), Zika virus (ZIKV) and Hepatitis C virus (HCV) infections. Two mechanisms of action have been described by two different groups: one involving activity on extracellular particles, and the other regulating the immune system. On Dengue virus (DENV), Zika virus (ZIKV), suppress the established viral infection, similar to the effect of interferon (IFN)-beta. Mechanistically, upregulates the expression of IFN-beta by activating interferon regulatory transcription factor 3 (IRF3) phosphorylation. On HCV and DENV, acts by inactivating extra-cellular infectious particles without affecting viral replication. Shows very weak inhibition on measles virus. Is neither toxic nor hemolytic in vitro at high concentrations. The polypeptide is Scorpine-like peptide Smp76 (Scorpio palmatus (Israeli golden scorpion)).